Reading from the N-terminus, the 270-residue chain is MNIIITGANGYIGRYVVKELLNKGHKVIAILFDGESPHSFLSGAELFYGDIFALSQEKKVDLVQNAECLLHLAWQAGFNHRDPSHLNNVMKHYQFLTSMAELGIKNISVAGTMHEVGYFVGPIDANTPCNPRNPYGIAKNFLRQAMFDFASVTPELNLRWLRFYYITGDDRFNNSIFTKILKAEDEVQEYFPLNSGEMLYDFVDIKDLSLQIEERIISKESGIFNCCSGKPKSLRTAVEEFIAEHNLKIKPKYNVFPARSYDSMAVWGAK.

NAD(+)-binding positions include 11–12 (YI), 50–51 (DI), 72–76 (LAWQA), Asn87, Thr112, Tyr135, and Lys139. Positions 112 and 135 each coordinate substrate. The Proton acceptor role is filled by Tyr135.

Belongs to the NAD(P)-dependent epimerase/dehydratase family.

It carries out the reaction dTDP-6-deoxy-beta-L-talose + NAD(+) = dTDP-4-dehydro-beta-L-rhamnose + NADH + H(+). Its pathway is bacterial outer membrane biogenesis; LPS O-antigen biosynthesis. Its function is as follows. Catalyzes the reduction of dTDP-6-deoxy-L-lyxo-4-hexulose to dTDP-6-deoxy-L-talose. The protein is dTDP-6-deoxy-L-talose 4-dehydrogenase (NAD(+)) (tll) of Aggregatibacter actinomycetemcomitans (Actinobacillus actinomycetemcomitans).